The following is a 31-amino-acid chain: Cytochrome b6-f complex subunit 6 (31 aa).

A helical membrane pass occupies residues 4 to 24 (ITSYFGFLLVALTITSALFIG).

It belongs to the PetL family. In terms of assembly, the 4 large subunits of the cytochrome b6-f complex are cytochrome b6, subunit IV (17 kDa polypeptide, PetD), cytochrome f and the Rieske protein, while the 4 small subunits are PetG, PetL, PetM and PetN. The complex functions as a dimer.

Its subcellular location is the plastid. It localises to the chloroplast thylakoid membrane. In terms of biological role, component of the cytochrome b6-f complex, which mediates electron transfer between photosystem II (PSII) and photosystem I (PSI), cyclic electron flow around PSI, and state transitions. PetL is important for photoautotrophic growth as well as for electron transfer efficiency and stability of the cytochrome b6-f complex. The polypeptide is Cytochrome b6-f complex subunit 6 (Panax ginseng (Korean ginseng)).